Here is an 822-residue protein sequence, read N- to C-terminus: Protein smoothened (822 aa).

A signal peptide spans 1–28 (MSSKRPCSIVGSFWMLWIWTATSMVARA). Residues 29-212 (VILHPNETIF…EDEHSDMHSY (184 aa)) lie on the Extracellular side of the membrane. Residue Asn34 is glycosylated (N-linked (GlcNAc...) asparagine). 5 disulfide bridges follow: Cys42–Cys157, Cys48–Cys112, Cys56–Cys105, Cys96–Cys132, and Cys125–Cys147. The 118-residue stretch at 43–160 (KKSTTCEVLK…EQFPKGCQNE (118 aa)) folds into the FZ domain. Residue Asp73 participates in cholesterol binding. The N-linked (GlcNAc...) asparagine glycan is linked to Asn167. 3 cysteine pairs are disulfide-bonded: Cys172–Cys192, Cys196–Cys274, and Cys293–Cys369. The chain crosses the membrane as a helical span at residues 213 to 233 (IAVFGTITLLCTFFTLATFLA). Residues 234–241 (DWKNSNRY) are Cytoplasmic-facing. The helical transmembrane segment at 242 to 262 (PAVILFYVNACFFIGSIGWLA) threads the bilayer. At 263–293 (QFMDGARNEIVCKSDNTMRLGEPSSTETLSC) the chain is on the extracellular side. Residues 294–314 (VIIFVIVYYSLMSGVIWFVML) traverse the membrane as a helical segment. The Cytoplasmic segment spans residues 315–335 (TYAWHTSFKALGTTHQPLSGK). Residues 336–356 (TSYFHLVTWSIPFILTVAILA) form a helical membrane-spanning segment. Residues 357–381 (NSQVDADSVSGICFVGYRYYEYRAG) lie on the Extracellular side of the membrane. Position 373 (Tyr373) interacts with cholesterol. Residues 382-402 (FVLAPIGFVLVIGGYFLIRGV) traverse the membrane as a helical segment. The Cytoplasmic portion of the chain corresponds to 403–430 (MTLFSIKSNHPGLLSEKAASKINETMLR). The chain crosses the membrane as a helical span at residues 431 to 451 (LGIFGFLAFGFVLITFGCHFY). Residues 452–503 (DFFNQAEWERSFREYVLCEANVTIAHQTNKPIPECAIKNRPSLLVGKINLFS) lie on the Extracellular side of the membrane. A disulfide bridge connects residues Cys469 and Cys486. Asn472 is a glycosylation site (N-linked (GlcNAc...) asparagine). The helical transmembrane segment at 504 to 524 (MFGTGIAMSTWVWTKATILIW) threads the bilayer. The Cytoplasmic segment spans residues 525–822 (KRTWFRIIGR…AELLDADSDF (298 aa)). Positions 645–687 (MMKRKKKKKKRRKEVRPAGPAADEGNPAYHRREFGPSAVPRLP) are disordered. Residues 647 to 658 (KRKKKKKKRRKE) are compositionally biased toward basic residues.

It belongs to the G-protein coupled receptor Fz/Smo family. Monomer.

Its subcellular location is the cell membrane. It localises to the cell projection. The protein localises to the cilium. Its function is as follows. G protein-coupled receptor which associates with the patched protein (ptch) to transduce Hedgehog protein signaling. Binding of sonic hedgehog (shh) to its receptor patched prevents inhibition of smoothened (smo) by patched. When active, smo binds to and sequesters protein kinase A catalytic subunit prkaca at the cell membrane, preventing prkaca-mediated phosphorylation of gli transcription factors which releases the gli proteins from prkaca-mediated inhibition and allows for transcriptional activation of Hedgehog signaling pathway target genes. Required for the development of primary and secondary motoneurons but not for the specification of midbrain dopaminergic neurons or development of the medial floor plate. Required for induction of lateral floor plate and posterior motoneurons, anterior neural plate patterning, dorsoventral forebrain patterning, dorsoventral retinal patterning, optic stalk development, and formation of the forebrain primary axonal scaffold. Required to regulate the formation of a subset of cerebellar neurons by limiting wnt1 expression which controls cerebellar expression of transcription factor olig2. Required for development of the pancreas. Required for muscle development. Required for the formation of a single continuous intestinal lumen from multiple discontinuous lumens, probably by regulating remodeling through rab11a-mediated trafficking to facilitate lumen fusion. Required for development of the adenohypophysis. Required for anteroposterior patterning of the otic vesicle. Required for development of the anterior craniofacial skeleton. Required for patterning of the caudal fin. Required during gastrulation and early somitogenesis stages to promote cardiomyocyte formation by regulating the specification of myocardial progenitors. Required for induction of arterial endothelial cell formation by repressing venous cell fate. The polypeptide is Protein smoothened (Danio rerio (Zebrafish)).